We begin with the raw amino-acid sequence, 64 residues long: Large ribosomal subunit protein bL35 (64 aa).

The protein belongs to the bacterial ribosomal protein bL35 family.

The protein is Large ribosomal subunit protein bL35 of Shewanella putrefaciens (strain CN-32 / ATCC BAA-453).